The chain runs to 227 residues: Cytochrome c oxidase subunit 2 (227 aa).

Topologically, residues 1–14 (MAHPVQLGLQDATS) are mitochondrial intermembrane. Residues 15-45 (PVMEELVTFHDHALMAMFLISFLILYALSAT) form a helical membrane-spanning segment. At 46-59 (LTTKLTNTNITDAQ) the chain is on the mitochondrial matrix side. A helical membrane pass occupies residues 60–87 (EMETIWTILPAVILVLIALPSLRILYMT). Residues 88–227 (DEINNPSFTI…IFEMGPVFTL (140 aa)) are Mitochondrial intermembrane-facing. Cu cation contacts are provided by His161, Cys196, Glu198, Cys200, His204, and Met207. Glu198 is a binding site for Mg(2+).

The protein belongs to the cytochrome c oxidase subunit 2 family. As to quaternary structure, component of the cytochrome c oxidase (complex IV, CIV), a multisubunit enzyme composed of 14 subunits. The complex is composed of a catalytic core of 3 subunits MT-CO1, MT-CO2 and MT-CO3, encoded in the mitochondrial DNA, and 11 supernumerary subunits COX4I, COX5A, COX5B, COX6A, COX6B, COX6C, COX7A, COX7B, COX7C, COX8 and NDUFA4, which are encoded in the nuclear genome. The complex exists as a monomer or a dimer and forms supercomplexes (SCs) in the inner mitochondrial membrane with NADH-ubiquinone oxidoreductase (complex I, CI) and ubiquinol-cytochrome c oxidoreductase (cytochrome b-c1 complex, complex III, CIII), resulting in different assemblies (supercomplex SCI(1)III(2)IV(1) and megacomplex MCI(2)III(2)IV(2)). Found in a complex with TMEM177, COA6, COX18, COX20, SCO1 and SCO2. Interacts with TMEM177 in a COX20-dependent manner. Interacts with COX20. Interacts with COX16. Requires Cu cation as cofactor.

The protein localises to the mitochondrion inner membrane. The enzyme catalyses 4 Fe(II)-[cytochrome c] + O2 + 8 H(+)(in) = 4 Fe(III)-[cytochrome c] + 2 H2O + 4 H(+)(out). Functionally, component of the cytochrome c oxidase, the last enzyme in the mitochondrial electron transport chain which drives oxidative phosphorylation. The respiratory chain contains 3 multisubunit complexes succinate dehydrogenase (complex II, CII), ubiquinol-cytochrome c oxidoreductase (cytochrome b-c1 complex, complex III, CIII) and cytochrome c oxidase (complex IV, CIV), that cooperate to transfer electrons derived from NADH and succinate to molecular oxygen, creating an electrochemical gradient over the inner membrane that drives transmembrane transport and the ATP synthase. Cytochrome c oxidase is the component of the respiratory chain that catalyzes the reduction of oxygen to water. Electrons originating from reduced cytochrome c in the intermembrane space (IMS) are transferred via the dinuclear copper A center (CU(A)) of subunit 2 and heme A of subunit 1 to the active site in subunit 1, a binuclear center (BNC) formed by heme A3 and copper B (CU(B)). The BNC reduces molecular oxygen to 2 water molecules using 4 electrons from cytochrome c in the IMS and 4 protons from the mitochondrial matrix. This Theropithecus gelada (Gelada baboon) protein is Cytochrome c oxidase subunit 2 (MT-CO2).